The chain runs to 99 residues: Ragulator complex protein LAMTOR4 (99 aa).

Position 1 is an N-acetylmethionine (methionine 1). Threonine 2 carries the post-translational modification N-acetylthreonine; in Ragulator complex protein LAMTOR4, N-terminally processed. The residue at position 67 (serine 67) is a Phosphoserine.

Belongs to the LAMTOR4 family. As to quaternary structure, part of the Ragulator complex composed of LAMTOR1, LAMTOR2, LAMTOR3, LAMTOR4 and LAMTOR5. LAMTOR4 and LAMTOR5 form a heterodimer that interacts, through LAMTOR1, with a LAMTOR2, LAMTOR3 heterodimer. The Ragulator complex interacts with both the mTORC1 complex and heterodimers constituted of the Rag GTPases RagA/RRAGA, RagB/RRAGB, RagC/RRAGC and RagD/RRAGD; regulated by amino acid availability. The Ragulator complex interacts with SLC38A9; the probable amino acid sensor. Component of the lysosomal folliculin complex (LFC), composed of FLCN, FNIP1 (or FNIP2), RagA/RRAGA or RagB/RRAGB GDP-bound, RagC/RRAGC or RagD/RRAGD GTP-bound, and Ragulator. Phosphorylation at Ser-67 by PKA inhibits Ragulator complex assembly.

It localises to the lysosome. In terms of biological role, as part of the Ragulator complex it is involved in amino acid sensing and activation of mTORC1, a signaling complex promoting cell growth in response to growth factors, energy levels, and amino acids. Activated by amino acids through a mechanism involving the lysosomal V-ATPase, the Ragulator plays a dual role for the small GTPases Rag (RagA/RRAGA, RagB/RRAGB, RagC/RRAGC and/or RagD/RRAGD): it (1) acts as a guanine nucleotide exchange factor (GEF), activating the small GTPases Rag and (2) mediates recruitment of Rag GTPases to the lysosome membrane. Activated Ragulator and Rag GTPases function as a scaffold recruiting mTORC1 to lysosomes where it is in turn activated. In Bos taurus (Bovine), this protein is Ragulator complex protein LAMTOR4 (LAMTOR4).